Consider the following 481-residue polypeptide: Pyruvate kinase (481 aa).

Arginine 33 serves as a coordination point for substrate. 4 residues coordinate K(+): asparagine 35, serine 37, aspartate 67, and threonine 68. Residue 35–38 (NFSH) coordinates ATP. ATP is bound by residues arginine 74 and lysine 155. Mg(2+) is bound at residue glutamate 221. Residues glycine 244, aspartate 245, and threonine 277 each contribute to the substrate site. Mg(2+) is bound at residue aspartate 245.

The protein belongs to the pyruvate kinase family. In terms of assembly, homotetramer. Requires Mg(2+) as cofactor. K(+) is required as a cofactor.

It catalyses the reaction pyruvate + ATP = phosphoenolpyruvate + ADP + H(+). The protein operates within carbohydrate degradation; glycolysis; pyruvate from D-glyceraldehyde 3-phosphate: step 5/5. This is Pyruvate kinase (pyk) from Chlamydia muridarum (strain MoPn / Nigg).